The chain runs to 100 residues: Signal recognition particle 19 kDa protein (100 aa).

This sequence belongs to the SRP19 family. In terms of assembly, part of the signal recognition particle protein translocation system, which is composed of SRP and FtsY. Archaeal SRP consists of a 7S RNA molecule of 300 nucleotides and two protein subunits: SRP54 and SRP19.

It is found in the cytoplasm. Its function is as follows. Involved in targeting and insertion of nascent membrane proteins into the cytoplasmic membrane. Binds directly to 7S RNA and mediates binding of the 54 kDa subunit of the SRP. This chain is Signal recognition particle 19 kDa protein, found in Pyrococcus furiosus (strain ATCC 43587 / DSM 3638 / JCM 8422 / Vc1).